The following is a 651-amino-acid chain: Acetyl-coenzyme A synthetase (651 aa).

CoA is bound by residues 190–193 (RGGK), T312, and N336. Residues 388–390 (GEP), 412–417 (DTWWQT), D501, and R516 each bind ATP. A CoA-binding site is contributed by S524. Residue R527 coordinates ATP. Mg(2+)-binding residues include V538, H540, and V543. A CoA-binding site is contributed by R585. K610 bears the N6-acetyllysine mark.

Belongs to the ATP-dependent AMP-binding enzyme family. Mg(2+) is required as a cofactor. Acetylated. Deacetylation by the SIR2-homolog deacetylase activates the enzyme.

It catalyses the reaction acetate + ATP + CoA = acetyl-CoA + AMP + diphosphate. Its function is as follows. Catalyzes the conversion of acetate into acetyl-CoA (AcCoA), an essential intermediate at the junction of anabolic and catabolic pathways. AcsA undergoes a two-step reaction. In the first half reaction, AcsA combines acetate with ATP to form acetyl-adenylate (AcAMP) intermediate. In the second half reaction, it can then transfer the acetyl group from AcAMP to the sulfhydryl group of CoA, forming the product AcCoA. In Mesorhizobium japonicum (strain LMG 29417 / CECT 9101 / MAFF 303099) (Mesorhizobium loti (strain MAFF 303099)), this protein is Acetyl-coenzyme A synthetase.